The sequence spans 214 residues: ATP phosphoribosyltransferase (214 aa).

It belongs to the ATP phosphoribosyltransferase family. Short subfamily. Heteromultimer composed of HisG and HisZ subunits.

It localises to the cytoplasm. The catalysed reaction is 1-(5-phospho-beta-D-ribosyl)-ATP + diphosphate = 5-phospho-alpha-D-ribose 1-diphosphate + ATP. Its pathway is amino-acid biosynthesis; L-histidine biosynthesis; L-histidine from 5-phospho-alpha-D-ribose 1-diphosphate: step 1/9. In terms of biological role, catalyzes the condensation of ATP and 5-phosphoribose 1-diphosphate to form N'-(5'-phosphoribosyl)-ATP (PR-ATP). Has a crucial role in the pathway because the rate of histidine biosynthesis seems to be controlled primarily by regulation of HisG enzymatic activity. The sequence is that of ATP phosphoribosyltransferase from Leptothrix cholodnii (strain ATCC 51168 / LMG 8142 / SP-6) (Leptothrix discophora (strain SP-6)).